The following is a 179-amino-acid chain: Peptide deformylase (179 aa).

Residues Cys102 and His144 each coordinate Fe cation. Glu145 is an active-site residue. Position 148 (His148) interacts with Fe cation.

It belongs to the polypeptide deformylase family. Requires Fe(2+) as cofactor.

It carries out the reaction N-terminal N-formyl-L-methionyl-[peptide] + H2O = N-terminal L-methionyl-[peptide] + formate. Its function is as follows. Removes the formyl group from the N-terminal Met of newly synthesized proteins. Requires at least a dipeptide for an efficient rate of reaction. N-terminal L-methionine is a prerequisite for activity but the enzyme has broad specificity at other positions. In Wolbachia pipientis subsp. Culex pipiens (strain wPip), this protein is Peptide deformylase.